The primary structure comprises 304 residues: NAD kinase (304 aa).

Residue Asp-77 is the Proton acceptor of the active site. NAD(+) is bound by residues 77–78 (DG), Arg-82, 151–152 (NE), Arg-162, Asp-181, and 192–197 (TAYSFS).

It belongs to the NAD kinase family. Requires a divalent metal cation as cofactor.

The protein resides in the cytoplasm. It carries out the reaction NAD(+) + ATP = ADP + NADP(+) + H(+). Its function is as follows. Involved in the regulation of the intracellular balance of NAD and NADP, and is a key enzyme in the biosynthesis of NADP. Catalyzes specifically the phosphorylation on 2'-hydroxyl of the adenosine moiety of NAD to yield NADP. This chain is NAD kinase, found in Leifsonia xyli subsp. xyli (strain CTCB07).